The following is a 334-amino-acid chain: D-alanine--D-alanine ligase (334 aa).

In terms of domain architecture, ATP-grasp spans 121–327 (KLWYDALDIP…FSEFLVQCVT (207 aa)). 151 to 206 (AFGHWGSIFVKAARQGSSVGCYKVTTEDQIAPAIEAAFGFSEQVLVEQAVKPRELE) is a binding site for ATP. Mg(2+)-binding residues include aspartate 281, glutamate 294, and asparagine 296.

It belongs to the D-alanine--D-alanine ligase family. The cofactor is Mg(2+). Requires Mn(2+) as cofactor.

The protein resides in the cytoplasm. The catalysed reaction is 2 D-alanine + ATP = D-alanyl-D-alanine + ADP + phosphate + H(+). The protein operates within cell wall biogenesis; peptidoglycan biosynthesis. Functionally, cell wall formation. This Vibrio cholerae serotype O1 (strain ATCC 39315 / El Tor Inaba N16961) protein is D-alanine--D-alanine ligase.